The chain runs to 254 residues: Imidazole glycerol phosphate synthase subunit HisF (254 aa).

Residues Asp13 and Asp132 contribute to the active site.

The protein belongs to the HisA/HisF family. In terms of assembly, heterodimer of HisH and HisF.

Its subcellular location is the cytoplasm. The catalysed reaction is 5-[(5-phospho-1-deoxy-D-ribulos-1-ylimino)methylamino]-1-(5-phospho-beta-D-ribosyl)imidazole-4-carboxamide + L-glutamine = D-erythro-1-(imidazol-4-yl)glycerol 3-phosphate + 5-amino-1-(5-phospho-beta-D-ribosyl)imidazole-4-carboxamide + L-glutamate + H(+). It functions in the pathway amino-acid biosynthesis; L-histidine biosynthesis; L-histidine from 5-phospho-alpha-D-ribose 1-diphosphate: step 5/9. In terms of biological role, IGPS catalyzes the conversion of PRFAR and glutamine to IGP, AICAR and glutamate. The HisF subunit catalyzes the cyclization activity that produces IGP and AICAR from PRFAR using the ammonia provided by the HisH subunit. This Wolinella succinogenes (strain ATCC 29543 / DSM 1740 / CCUG 13145 / JCM 31913 / LMG 7466 / NCTC 11488 / FDC 602W) (Vibrio succinogenes) protein is Imidazole glycerol phosphate synthase subunit HisF.